Here is a 505-residue protein sequence, read N- to C-terminus: Nostrin (505 aa).

Residues 1 to 260 (MRDPLTDCSY…AISKIDIEKD (260 aa)) enclose the F-BAR domain. Coiled coils occupy residues 101–128 (AHQV…LVIS), 160–222 (ITTE…RIQL), and 295–332 (KERQ…AYSS). Ser114 carries the phosphoserine modification. The region spanning 292–372 (AMSKERQTSS…SYKLSSVLAE (81 aa)) is the REM-1 domain. The SH3 domain maps to 437 to 496 (LGNGLCKALYPFQARQDDELDLEKGDIVTIHKKKDEGWWFGSLKGKKGHFPAAYVEELPL). The residue at position 478 (Ser478) is a Phosphoserine.

In terms of assembly, homotrimer. Interacts with DAB2. Interacts with NOS3, DNM2, WASL and CAV1. Interacts (via SH3 domain) with DNM2; this interaction allows the recruitment of NOS3 to dynamin-positive structures. As to expression, present in pulmonary arterial endothelial cells (at protein level).

It is found in the cell membrane. The protein resides in the cytoplasmic vesicle. Its subcellular location is the cytoplasm. It localises to the cytoskeleton. In terms of biological role, multivalent adapter protein which may decrease NOS3 activity by inducing its translocation away from the plasma membrane. This chain is Nostrin, found in Bos taurus (Bovine).